A 372-amino-acid chain; its full sequence is MKISTLAVVSAFAVTAIAGPVRPDGIGSDKYLIELGPGETQWVTKDQKHHMRAAGKTFIDITDEFGSGFTTTEVVPANYPKSARHASLIKPLIANLSKENLMRDLTTLTKFNNRYYESDTGVESATWILQQVQKIIKDSGVKGAKVEKFTNQFKQFNIIATIPGSSKSTVIVGAHQDSINSKSPMKGRAPGADDNGSGTVVILEAFRNILKSKAIQAANATNTLEFHWYAGEEGGLLGSNNIFKKYKADGRQVKAMLNQDLTGFTNNGKPEQLGLIADNTNQQLNEFCKMIVKQYASIPIVEAKCGYACSDHASAHRNGFPASFVAETSYRNTNPYLHTDGDVIANLNFNHMLEHAKVVLGFMGELAMAPNL.

Positions 1 to 18 are cleaved as a signal peptide; the sequence is MKISTLAVVSAFAVTAIA. An N-linked (GlcNAc...) asparagine glycan is attached at N95. Zn(2+)-binding residues include H175 and D194. 2 N-linked (GlcNAc...) asparagine glycosylation sites follow: N195 and N219. Positions 233 and 260 each coordinate Zn(2+). A disulfide bond links C305 and C309. H338 provides a ligand contact to Zn(2+).

It belongs to the peptidase M28 family. M28E subfamily. As to quaternary structure, monomer. The cofactor is Zn(2+).

It is found in the secreted. Probable extracellular aminopeptidase which contributes to pathogenicity. The polypeptide is Probable leucine aminopeptidase MCYG_03459 (Arthroderma otae (strain ATCC MYA-4605 / CBS 113480) (Microsporum canis)).